The sequence spans 296 residues: NmrA-like family domain-containing protein 1 (296 aa).

Residues 11-16 (GATGAQ), 37-41 (RSPGR), 58-59 (DQ), 79-81 (TNF), K133, and 155-158 (YYEN) contribute to the NADP(+) site.

Belongs to the NmrA-type oxidoreductase family. Homodimer.

The protein localises to the cytoplasm. It localises to the perinuclear region. The protein resides in the nucleus. Redox sensor protein. Undergoes restructuring and subcellular redistribution in response to changes in intracellular NADPH/NADP(+) levels. The chain is NmrA-like family domain-containing protein 1 (NMRAL1) from Gallus gallus (Chicken).